The following is a 176-amino-acid chain: Endoribonuclease YbeY (176 aa).

Zn(2+) is bound by residues His117, His121, and His127.

It belongs to the endoribonuclease YbeY family. Zn(2+) serves as cofactor.

The protein localises to the cytoplasm. Single strand-specific metallo-endoribonuclease involved in late-stage 70S ribosome quality control and in maturation of the 3' terminus of the 16S rRNA. The chain is Endoribonuclease YbeY from Methylocella silvestris (strain DSM 15510 / CIP 108128 / LMG 27833 / NCIMB 13906 / BL2).